The sequence spans 348 residues: Fructose-1,6-bisphosphatase class 1 (348 aa).

Residues Glu-92, Asp-111, Leu-113, and Asp-114 each contribute to the Mg(2+) site. Residues 114–117 and Asn-204 contribute to the substrate site; that span reads DGSS. Glu-276 is a binding site for Mg(2+).

The protein belongs to the FBPase class 1 family. Homotetramer. It depends on Mg(2+) as a cofactor.

It localises to the cytoplasm. The catalysed reaction is beta-D-fructose 1,6-bisphosphate + H2O = beta-D-fructose 6-phosphate + phosphate. Its pathway is carbohydrate biosynthesis; gluconeogenesis. This Methylorubrum extorquens (strain CM4 / NCIMB 13688) (Methylobacterium extorquens) protein is Fructose-1,6-bisphosphatase class 1.